Here is a 330-residue protein sequence, read N- to C-terminus: Src kinase-associated phosphoprotein 2-B (330 aa).

A disordered region spans residues D57–D84. Residues A59–D68 are compositionally biased toward acidic residues. One can recognise a PH domain in the interval E105–G208. The interval E236–T261 is disordered. The span at E240 to T250 shows a compositional bias: basic and acidic residues. Over residues Q251–T261 the composition is skewed to polar residues. Positions D268–D329 constitute an SH3 domain.

The protein belongs to the SKAP family. Phosphorylated on tyrosines.

It localises to the cytoplasm. In terms of biological role, may be involved in B-cell and macrophage adhesion processes. May play a role in src signaling pathway. In Xenopus laevis (African clawed frog), this protein is Src kinase-associated phosphoprotein 2-B (skap2-b).